Here is a 757-residue protein sequence, read N- to C-terminus: RNA-directed RNA polymerase catalytic subunit (757 aa).

The interval 52–82 (KGKWTTNTETGAPQLNPIDGPLPEDNEPSGY) is disordered. Residues 55-64 (WTTNTETGAP) show a composition bias toward polar residues. Short sequence motifs (nuclear localization signal) lie at residues 187–195 (RKRRVRDNM) and 203–216 (RTIG…NKKS). Residues 249–256 (RGFVYFVE) form a promoter-binding site region. Positions 286–483 (VRKMMTNSQD…GINMSKKKSY (198 aa)) constitute a RdRp catalytic domain.

The protein belongs to the influenza viruses polymerase PB1 family. As to quaternary structure, influenza RNA polymerase is composed of three subunits: PB1, PB2 and PA. Interacts (via N-terminus) with PA (via C-terminus). Interacts (via C-terminus) with PB2 (via N-terminus); this interaction is essential for transcription initiation. Phosphorylated by host PRKCA.

It is found in the host nucleus. It localises to the host cytoplasm. It catalyses the reaction RNA(n) + a ribonucleoside 5'-triphosphate = RNA(n+1) + diphosphate. Its function is as follows. RNA-dependent RNA polymerase which is responsible for replication and transcription of virus RNA segments. The transcription of viral mRNAs occurs by a unique mechanism called cap-snatching. 5' methylated caps of cellular mRNAs are cleaved after 10-13 nucleotides by PA. In turn, these short capped RNAs are used as primers by PB1 for transcription of viral mRNAs. During virus replication, PB1 initiates RNA synthesis and copy vRNA into complementary RNA (cRNA) which in turn serves as a template for the production of more vRNAs. This Influenza A virus (strain A/Chicken/Shantou/4231/2003 H5N1 genotype V) protein is RNA-directed RNA polymerase catalytic subunit.